Consider the following 62-residue polypeptide: Large ribosomal subunit protein eL24 (62 aa).

Positions 7, 10, 33, and 37 each coordinate Zn(2+). The C4-type zinc finger occupies 7–37 (CSFCGKDILPGTGLMYVRNDGSLLWFCSSKC).

It belongs to the eukaryotic ribosomal protein eL24 family. As to quaternary structure, part of the 50S ribosomal subunit. Forms a cluster with proteins L3 and L14. The cofactor is Zn(2+).

In terms of biological role, binds to the 23S rRNA. This chain is Large ribosomal subunit protein eL24, found in Sulfolobus acidocaldarius (strain ATCC 33909 / DSM 639 / JCM 8929 / NBRC 15157 / NCIMB 11770).